The sequence spans 232 residues: Ubiquinone biosynthesis O-methyltransferase (232 aa).

4 residues coordinate S-adenosyl-L-methionine: arginine 36, glycine 55, aspartate 76, and leucine 120.

The protein belongs to the methyltransferase superfamily. UbiG/COQ3 family.

The catalysed reaction is a 3-demethylubiquinol + S-adenosyl-L-methionine = a ubiquinol + S-adenosyl-L-homocysteine + H(+). It catalyses the reaction a 3-(all-trans-polyprenyl)benzene-1,2-diol + S-adenosyl-L-methionine = a 2-methoxy-6-(all-trans-polyprenyl)phenol + S-adenosyl-L-homocysteine + H(+). It functions in the pathway cofactor biosynthesis; ubiquinone biosynthesis. Its function is as follows. O-methyltransferase that catalyzes the 2 O-methylation steps in the ubiquinone biosynthetic pathway. The protein is Ubiquinone biosynthesis O-methyltransferase of Pseudomonas aeruginosa (strain UCBPP-PA14).